A 253-amino-acid chain; its full sequence is uncharacterized protein (253 aa).

C2HC LYAR-type zinc fingers lie at residues M1–R26 and N27–I51. Residues C6, C9, H21, C25, C32, C35, H47, and C50 each contribute to the Zn(2+) site. Residues A136 to T171 are a coiled coil.

The protein resides in the nucleus. This is an uncharacterized protein from Caenorhabditis elegans.